Consider the following 148-residue polypeptide: UPF0260 protein YE2365 (148 aa).

Belongs to the UPF0260 family.

This chain is UPF0260 protein YE2365, found in Yersinia enterocolitica serotype O:8 / biotype 1B (strain NCTC 13174 / 8081).